A 664-amino-acid polypeptide reads, in one-letter code: MSELLLELFSEEIPAFMQKNAEEGYLNIFTKIFEENEIFAKVQAFAGPRRITLYATHLPKVTLPKETEIKGPSIDAPEAAINGFCKAHNVSKLELSTKLINNQLYYFFVKKTEEREIKEILPEIIIEAINKYSWAKSMFWGDYKIKWIRPLRNILCIFDGEVLPLQFGHLTANNIAYGHRYRLTDNKKLEVTDFEDYKNKLSENHVILERTKREEIIKTGLLELANSRNLNIKEDNRLIEEVAGLSEFPVVLLGKIPQKFLELPKEVLISSMRTHQKYFCLFDKEGNFAQYFLFVSNGRFANAELVIKGNEKVLSARLSDALYFYKQDIAKTLESRLGKLEAVTFHAKLGNLREKVERVAKICSYTALDNTDLITAAKLCKSDLVSEMVGEFPDLQGIMGYYYAKHEGLGEEVAAAIKDHYKPQGLSDNVPGGNAALLALADKVDSLVGLMIAGEAPTGSGDPYALRRQALGIIRIILENKLELNLNDLIIFSLKLYGNSADKDLITSFFEERAKFYFKNDYDIALINAALDLNLVDTKFKLDSLKEFLVEDAGKQLLNAYKRASNIIDGQKITGLVDASLFSTQPEKELFEVMQKISPQVTSSISDKDYNKALNLLSFLLTPITSFFDNVLVNDPDPKIAENRLSLLHNICELFDKVAKFCRL.

It belongs to the class-II aminoacyl-tRNA synthetase family. In terms of assembly, tetramer of two alpha and two beta subunits.

It is found in the cytoplasm. The enzyme catalyses tRNA(Gly) + glycine + ATP = glycyl-tRNA(Gly) + AMP + diphosphate. In Rickettsia felis (strain ATCC VR-1525 / URRWXCal2) (Rickettsia azadi), this protein is Glycine--tRNA ligase beta subunit.